A 127-amino-acid polypeptide reads, in one-letter code: Aspartate 1-decarboxylase (127 aa).

The active-site Schiff-base intermediate with substrate; via pyruvic acid is the S25. S25 is modified (pyruvic acid (Ser)). T57 contributes to the substrate binding site. The active-site Proton donor is the Y58. Residue 73-75 (GAA) participates in substrate binding.

It belongs to the PanD family. As to quaternary structure, heterooctamer of four alpha and four beta subunits. Pyruvate is required as a cofactor. Post-translationally, is synthesized initially as an inactive proenzyme, which is activated by self-cleavage at a specific serine bond to produce a beta-subunit with a hydroxyl group at its C-terminus and an alpha-subunit with a pyruvoyl group at its N-terminus.

It localises to the cytoplasm. The enzyme catalyses L-aspartate + H(+) = beta-alanine + CO2. The protein operates within cofactor biosynthesis; (R)-pantothenate biosynthesis; beta-alanine from L-aspartate: step 1/1. In terms of biological role, catalyzes the pyruvoyl-dependent decarboxylation of aspartate to produce beta-alanine. This Anoxybacillus flavithermus (strain DSM 21510 / WK1) protein is Aspartate 1-decarboxylase.